We begin with the raw amino-acid sequence, 477 residues long: Shikimate biosynthesis protein AroDE (477 aa).

Residues 1–209 form a 3-dehydroquinate dehydratase region; that stretch reads MLCATVSGPS…LEELLSYNYS (209 aa). Residues serine 21, 29–31, and 56–58 each bind 3-dehydroquinate; these read ELR and TFR. Catalysis depends on histidine 111, which acts as the Proton donor/acceptor; for 3-dehydroquinate dehydratase activity. Lysine 134 acts as the Schiff-base intermediate with substrate; for 3-dehydroquinate dehydratase activity in catalysis. 3-dehydroquinate contacts are provided by arginine 172 and glutamine 197. The tract at residues 210 to 477 is shikimate 5-dehydrogenase; it reads KLSEKSHIYG…NYVKNFMAKV (268 aa). 228 to 230 serves as a coordination point for shikimate; sequence SIS. The Proton acceptor; for shikimate dehydrogenase activity role is filled by lysine 279. Positions 300 and 315 each coordinate shikimate. NADP(+) is bound by residues 339 to 343, 362 to 364, and glycine 438; these read GAGGA and NRT. Glutamine 445 contacts shikimate.

This sequence in the N-terminal section; belongs to the type-I 3-dehydroquinase family. In the C-terminal section; belongs to the shikimate dehydrogenase family.

The catalysed reaction is 3-dehydroquinate = 3-dehydroshikimate + H2O. It catalyses the reaction shikimate + NADP(+) = 3-dehydroshikimate + NADPH + H(+). It functions in the pathway metabolic intermediate biosynthesis; chorismate biosynthesis; chorismate from D-erythrose 4-phosphate and phosphoenolpyruvate: step 3/7. Its pathway is metabolic intermediate biosynthesis; chorismate biosynthesis; chorismate from D-erythrose 4-phosphate and phosphoenolpyruvate: step 4/7. Its function is as follows. Bifunctional enzyme that catalyzes two sequential steps of the aromatic amino acids biosynthetic pathway. In the first reaction, the AroD domain catalyzes the cis-dehydration of 3-dehydroquinate (DHQ) and introduces the first double bond of the aromatic ring to yield 3-dehydroshikimate; in the second reaction, the AroE domain catalyzes the reversible NADPH linked reduction of 3-dehydroshikimate (DHSA) to yield shikimate (SA). The polypeptide is Shikimate biosynthesis protein AroDE (Chlamydia pneumoniae (Chlamydophila pneumoniae)).